The following is a 275-amino-acid chain: 2,3,4,5-tetrahydropyridine-2,6-dicarboxylate N-succinyltransferase (275 aa).

Residues arginine 105 and aspartate 142 each contribute to the substrate site.

It belongs to the transferase hexapeptide repeat family. Homotrimer.

It localises to the cytoplasm. It catalyses the reaction (S)-2,3,4,5-tetrahydrodipicolinate + succinyl-CoA + H2O = (S)-2-succinylamino-6-oxoheptanedioate + CoA. It participates in amino-acid biosynthesis; L-lysine biosynthesis via DAP pathway; LL-2,6-diaminopimelate from (S)-tetrahydrodipicolinate (succinylase route): step 1/3. The polypeptide is 2,3,4,5-tetrahydropyridine-2,6-dicarboxylate N-succinyltransferase (Pectobacterium atrosepticum (strain SCRI 1043 / ATCC BAA-672) (Erwinia carotovora subsp. atroseptica)).